Reading from the N-terminus, the 215-residue chain is MNIILFGPPGAGKGTQAKKLVDFYGIPQISTGDILRANVREGTELGLAAKAYMDKGELVPDNVLIGIIKNRLNEEDCKKGFILDGYPRTVPQADALETILDEIDKPIDVVLNLEVPDEVLVERISGRLMCKCGASYHTIANPPKKDNICDICGGEVYQRDDDKAEAVQNRLDVYKKQTQPLINYYEEKGILVTLDGTKDINVVFEDIKAVLAKFA.

10 to 15 (GAGKGT) contributes to the ATP binding site. An NMP region spans residues 30 to 59 (STGDILRANVREGTELGLAAKAYMDKGELV). Residues T31, R36, 57–59 (ELV), 85–88 (GYPR), and Q92 each bind AMP. The tract at residues 126-162 (GRLMCKCGASYHTIANPPKKDNICDICGGEVYQRDDD) is LID. R127 lines the ATP pocket. 2 residues coordinate Zn(2+): C130 and C132. 135-136 (SY) lines the ATP pocket. Zn(2+) contacts are provided by C149 and C152. Positions 159 and 170 each coordinate AMP. K198 contributes to the ATP binding site.

This sequence belongs to the adenylate kinase family. Monomer.

Its subcellular location is the cytoplasm. It carries out the reaction AMP + ATP = 2 ADP. It participates in purine metabolism; AMP biosynthesis via salvage pathway; AMP from ADP: step 1/1. Its function is as follows. Catalyzes the reversible transfer of the terminal phosphate group between ATP and AMP. Plays an important role in cellular energy homeostasis and in adenine nucleotide metabolism. This Methanosarcina mazei (strain ATCC BAA-159 / DSM 3647 / Goe1 / Go1 / JCM 11833 / OCM 88) (Methanosarcina frisia) protein is Adenylate kinase.